The following is a 638-amino-acid chain: ATP-dependent zinc metalloprotease FtsH (638 aa).

Residues 1–11 (MSQKGKNKKWR) lie on the Cytoplasmic side of the membrane. The helical transmembrane segment at 12 to 32 (SAGLYALLAIVLISLATTFLG) threads the bilayer. Over 33–114 (NRPPERLEIS…LAVRPVQEEG (82 aa)) the chain is Lumenal. Residues 115 to 135 (LLGRILSTFFLPVLLLLGLFF) traverse the membrane as a helical segment. The Cytoplasmic segment spans residues 136-638 (LLRRAQNGPG…TLPMAVNAGA (503 aa)). Position 209–216 (209–216 (GPPGTGKT)) interacts with ATP. Histidine 431 lines the Zn(2+) pocket. Residue glutamate 432 is part of the active site. Zn(2+) is bound by residues histidine 435 and aspartate 510.

This sequence in the central section; belongs to the AAA ATPase family. The protein in the C-terminal section; belongs to the peptidase M41 family. Homohexamer. The cofactor is Zn(2+).

The protein resides in the cellular thylakoid membrane. Its function is as follows. Acts as a processive, ATP-dependent zinc metallopeptidase for both cytoplasmic and membrane proteins. Plays a role in the quality control of integral membrane proteins. The protein is ATP-dependent zinc metalloprotease FtsH of Synechococcus sp. (strain JA-2-3B'a(2-13)) (Cyanobacteria bacterium Yellowstone B-Prime).